The following is a 209-amino-acid chain: Large ribosomal subunit protein uL3 (209 aa).

N5-methylglutamine is present on Q150.

This sequence belongs to the universal ribosomal protein uL3 family. As to quaternary structure, part of the 50S ribosomal subunit. Forms a cluster with proteins L14 and L19. Post-translationally, methylated by PrmB.

One of the primary rRNA binding proteins, it binds directly near the 3'-end of the 23S rRNA, where it nucleates assembly of the 50S subunit. This is Large ribosomal subunit protein uL3 from Salmonella paratyphi C (strain RKS4594).